A 430-amino-acid chain; its full sequence is Zinc carboxypeptidase A 1 (430 aa).

The signal sequence occupies residues methionine 1–alanine 22. In terms of domain architecture, Peptidase M14 spans glutamine 124 to valine 423. Zn(2+)-binding residues include histidine 187 and glutamate 190. Cysteine 252 and cysteine 275 are joined by a disulfide. Zn(2+) is bound at residue histidine 311. Residue glutamate 386 is the Proton donor/acceptor of the active site.

Belongs to the peptidase M14 family. The cofactor is Zn(2+).

The protein localises to the secreted. The protein is Zinc carboxypeptidase A 1 of Drosophila melanogaster (Fruit fly).